Reading from the N-terminus, the 482-residue chain is tRNA sulfurtransferase (482 aa).

Residues 61–165 (PAIRDALTRI…NDRLLLVKGR (105 aa)) form the THUMP domain. ATP-binding positions include 183-184 (LI), K265, G287, and Q296. A disulfide bridge connects residues C344 and C456. The region spanning 404-482 (FGANDAILDI…GFSNVKVYRP (79 aa)) is the Rhodanese domain. C456 serves as the catalytic Cysteine persulfide intermediate.

This sequence belongs to the ThiI family.

It is found in the cytoplasm. It catalyses the reaction [ThiI sulfur-carrier protein]-S-sulfanyl-L-cysteine + a uridine in tRNA + 2 reduced [2Fe-2S]-[ferredoxin] + ATP + H(+) = [ThiI sulfur-carrier protein]-L-cysteine + a 4-thiouridine in tRNA + 2 oxidized [2Fe-2S]-[ferredoxin] + AMP + diphosphate. The enzyme catalyses [ThiS sulfur-carrier protein]-C-terminal Gly-Gly-AMP + S-sulfanyl-L-cysteinyl-[cysteine desulfurase] + AH2 = [ThiS sulfur-carrier protein]-C-terminal-Gly-aminoethanethioate + L-cysteinyl-[cysteine desulfurase] + A + AMP + 2 H(+). It participates in cofactor biosynthesis; thiamine diphosphate biosynthesis. Catalyzes the ATP-dependent transfer of a sulfur to tRNA to produce 4-thiouridine in position 8 of tRNAs, which functions as a near-UV photosensor. Also catalyzes the transfer of sulfur to the sulfur carrier protein ThiS, forming ThiS-thiocarboxylate. This is a step in the synthesis of thiazole, in the thiamine biosynthesis pathway. The sulfur is donated as persulfide by IscS. In Klebsiella pneumoniae subsp. pneumoniae (strain ATCC 700721 / MGH 78578), this protein is tRNA sulfurtransferase.